Consider the following 397-residue polypeptide: MIRYFTAGESHGPALSAIVEGMPAGISIAPEDINDELARRQRGYGRGGRMNIETDTAAVLSGIRFGKTIGSPITLQIENRDWKNWTVKMAQFEQPEENIPAITIPRPGHADLTGMIKYGFQDIRPVIERASARETAARVAACSLAKVFLRHAGIQIGSYVSAIGPAGEIAPSPKMQELLSQGAASLSRAADASCVRMLDKENEEAAIAAIDKAKEDGDTLGGIIEVFITGVPLGLGTYVQHDRRLDAALAAALLSIQAVKGVEIGSAFDNARRPGSQVHDEMYVEDGSAPVRKTNRAGGIEGSMSNGQVIHLRAAMKPIATLMSPLHSFDLSSMEAHLSHIERSDTCAVPACSVIAEAVVAPILANALLEKTGGDHLEEILERLNAYKASIAKQFQT.

Residues arginine 40 and arginine 46 each contribute to the NADP(+) site. FMN is bound by residues 129–131, 257–258, glycine 302, 317–321, and arginine 343; these read RAS, QA, and KPIAT.

The protein belongs to the chorismate synthase family. Homotetramer. FMNH2 is required as a cofactor.

The catalysed reaction is 5-O-(1-carboxyvinyl)-3-phosphoshikimate = chorismate + phosphate. Its pathway is metabolic intermediate biosynthesis; chorismate biosynthesis; chorismate from D-erythrose 4-phosphate and phosphoenolpyruvate: step 7/7. Functionally, catalyzes the anti-1,4-elimination of the C-3 phosphate and the C-6 proR hydrogen from 5-enolpyruvylshikimate-3-phosphate (EPSP) to yield chorismate, which is the branch point compound that serves as the starting substrate for the three terminal pathways of aromatic amino acid biosynthesis. This reaction introduces a second double bond into the aromatic ring system. The protein is Chorismate synthase of Prosthecochloris aestuarii (strain DSM 271 / SK 413).